A 324-amino-acid chain; its full sequence is Arginase (324 aa).

Mn(2+)-binding residues include His-115, Asp-143, His-145, and Asp-147. Substrate is bound by residues 145-149 (HADIN), 156-158 (SGN), and Asp-202. Residues Asp-249 and Asp-251 each coordinate Mn(2+). Thr-263 and Glu-294 together coordinate substrate.

It belongs to the arginase family. Homotrimer. Requires Mn(2+) as cofactor.

It carries out the reaction L-arginine + H2O = urea + L-ornithine. The protein operates within nitrogen metabolism; urea cycle; L-ornithine and urea from L-arginine: step 1/1. In Emericella nidulans (strain FGSC A4 / ATCC 38163 / CBS 112.46 / NRRL 194 / M139) (Aspergillus nidulans), this protein is Arginase (agaA).